We begin with the raw amino-acid sequence, 550 residues long: Silent protein UshA(0) (550 aa).

The first 25 residues, 1 to 25, serve as a signal peptide directing secretion; it reads MKFLKRGVALALLAAFALTTQPAQA. A divalent metal cation-binding residues include Asp41, His43, Asp84, Asn116, His217, His252, and Gln254. Residues Cys258 and Cys275 are joined by a disulfide bond. Substrate-binding positions include Phe429 and 498 to 504; that span reads FNATGGD.

The protein belongs to the 5'-nucleotidase family. It depends on a divalent metal cation as a cofactor.

Its subcellular location is the periplasm. This is Silent protein UshA(0) (ushA) from Salmonella typhimurium (strain LT2 / SGSC1412 / ATCC 700720).